A 220-amino-acid chain; its full sequence is Pyrrolidone-carboxylate peptidase (220 aa).

Catalysis depends on residues glutamate 80, cysteine 143, and histidine 167.

This sequence belongs to the peptidase C15 family. Homotetramer.

The protein localises to the cytoplasm. It catalyses the reaction Release of an N-terminal pyroglutamyl group from a polypeptide, the second amino acid generally not being Pro.. Functionally, removes 5-oxoproline from various penultimate amino acid residues except L-proline. The protein is Pyrrolidone-carboxylate peptidase (pcp) of Thermococcus litoralis (strain ATCC 51850 / DSM 5473 / JCM 8560 / NS-C).